A 224-amino-acid polypeptide reads, in one-letter code: Cytidylate kinase (224 aa).

Residue 11–19 (GPAAAGKST) participates in ATP binding.

Belongs to the cytidylate kinase family. Type 1 subfamily.

Its subcellular location is the cytoplasm. The catalysed reaction is CMP + ATP = CDP + ADP. It carries out the reaction dCMP + ATP = dCDP + ADP. The sequence is that of Cytidylate kinase from Geobacillus kaustophilus (strain HTA426).